The chain runs to 227 residues: Ribonuclease 3 (227 aa).

An RNase III domain is found at 4–126 (LDRLERKIGY…IIGAMSLDQG (123 aa)). Glutamate 39 is a Mg(2+) binding site. Aspartate 43 is an active-site residue. Mg(2+)-binding residues include aspartate 112 and glutamate 115. Glutamate 115 is a catalytic residue. The DRBM domain occupies 153–226 (DAKTRLQEYL…AEQILKELDI (74 aa)).

This sequence belongs to the ribonuclease III family. As to quaternary structure, homodimer. Mg(2+) serves as cofactor.

The protein resides in the cytoplasm. It carries out the reaction Endonucleolytic cleavage to 5'-phosphomonoester.. Its function is as follows. Digests double-stranded RNA. Involved in the processing of primary rRNA transcript to yield the immediate precursors to the large and small rRNAs (23S and 16S). Processes some mRNAs, and tRNAs when they are encoded in the rRNA operon. Processes pre-crRNA and tracrRNA of type II CRISPR loci if present in the organism. The protein is Ribonuclease 3 of Haemophilus influenzae (strain 86-028NP).